The sequence spans 406 residues: Sorting nexin-6 (406 aa).

Met-1 is modified (N-acetylmethionine). Met-2 bears the N-acetylmethionine; in Sorting nexin-6, N-terminally processed mark. The tract at residues 2–179 (MEGLDDGPDF…NQDLSVRGKN (178 aa)) is interaction with PIM1. Residues 26 to 173 (LQSDAALQVD…HVFLEYNQDL (148 aa)) enclose the PX domain. A 1,2-diacyl-sn-glycero-3-phospho-(1D-myo-inositol-4,5-bisphosphate)-binding positions include 41 to 47 (SERDKVK), 100 to 106 (FDASREK), and 114 to 117 (EGSM). Phosphoserine occurs at positions 116 and 194. The membrane-binding amphipathic helix stretch occupies residues 182–199 (EKLEDFFKNMVKSADGVI). In terms of domain architecture, BAR spans 203-406 (VKDVDDFFEH…NCLAVLNGDT (204 aa)).

This sequence belongs to the sorting nexin family. Forms heterodimers with BAR domain-containing sorting nexins SNX1 and SNX2. The heterodimers are proposed to self-assemble into helical arrays on the membrane to stabilize and expand local membrane curvature underlying endosomal tubule formation. Thought to be a component of the originally described retromer complex (also called SNX-BAR retromer) which is a pentamer containing the heterotrimeric retromer cargo-selective complex (CSC), also described as vacuolar protein sorting subcomplex (VPS), and a heterodimeric membrane-deforming subcomplex formed between SNX1 or SNX2 and SNX5 or SNX6 (also called SNX-BAR subcomplex); the respective CSC and SNX-BAR subcomplexes associate with low affinity. Interacts with SNX1, SNX2, VPS26A, VPS29, VPS35, TGFB receptors, BACE1, BRMS1, PIP5K1C. Interacts with DCTN1; the association with DCTN1 is involved in movement of retromer-c ontaining vesicles toward the TGN. Interacts with PIM1; translocating SNX6 to the nucleus. Interacts with CDKN1B and GIT1. Post-translationally, in vitro phosphorylated by PIM1; not affecting PIM1-dependent nuclear translocation.

The protein localises to the early endosome membrane. The protein resides in the cytoplasmic vesicle. It is found in the cytoplasm. Its subcellular location is the nucleus. Functionally, involved in several stages of intracellular trafficking. Interacts with membranes phosphatidylinositol 3,4-bisphosphate and/or phosphatidylinositol 4,5-bisphosphate. Acts in part as component of the retromer membrane-deforming SNX-BAR subcomplex. The SNX-BAR retromer mediates retrograde transport of cargo proteins from endosomes to the trans-Golgi network (TGN) and is involved in endosome-to-plasma membrane transport for cargo protein recycling. The SNX-BAR subcomplex functions to deform the donor membrane into a tubular profile called endosome-to-TGN transport carrier (ETC). Does not have in vitro vesicle-to-membrane remodeling activity. Involved in retrograde endosome-to-TGN transport of lysosomal enzyme receptor IGF2R. May function as link between transport vesicles and dynactin. Negatively regulates retrograde transport of BACE1 from the cell surface to the trans-Golgi network. Involved in E-cadherin sorting and degradation; inhibits PIP5K1C-mediated E-cadherin degradation. In association with GIT1 involved in EGFR degradation. Promotes lysosomal degradation of CDKN1B. May contribute to transcription regulation. The protein is Sorting nexin-6 (SNX6) of Pongo abelii (Sumatran orangutan).